The sequence spans 272 residues: Putative UTP--glucose-1-phosphate uridylyltransferase (272 aa).

Belongs to the UDPGP type 2 family.

It carries out the reaction alpha-D-glucose 1-phosphate + UTP + H(+) = UDP-alpha-D-glucose + diphosphate. The polypeptide is Putative UTP--glucose-1-phosphate uridylyltransferase (ytdA) (Bacillus subtilis (strain 168)).